A 454-amino-acid polypeptide reads, in one-letter code: Chromosomal replication initiator protein DnaA (454 aa).

The domain I, interacts with DnaA modulators stretch occupies residues 1 to 83; the sequence is MMTDSMRLVW…RPLKVLLEVA (83 aa). The interval 83–115 is domain II; the sequence is AECVAEAPETPEEAPQQLCLPAFADIPRPSSGR. Positions 116–333 are domain III, AAA+ region; that stretch reads LLNRDFTFDS…SGIKGLAARN (218 aa). ATP contacts are provided by Gly160, Gly162, Lys163, and Ser164. A domain IV, binds dsDNA region spans residues 334 to 454; it reads SIMGRGIDLK…LCGKIEAGEF (121 aa).

The protein belongs to the DnaA family. In terms of assembly, oligomerizes as a right-handed, spiral filament on DNA at oriC.

It is found in the cytoplasm. In terms of biological role, plays an essential role in the initiation and regulation of chromosomal replication. ATP-DnaA binds to the origin of replication (oriC) to initiate formation of the DNA replication initiation complex once per cell cycle. Binds the DnaA box (a 9 base pair repeat at the origin) and separates the double-stranded (ds)DNA. Forms a right-handed helical filament on oriC DNA; dsDNA binds to the exterior of the filament while single-stranded (ss)DNA is stabiized in the filament's interior. The ATP-DnaA-oriC complex binds and stabilizes one strand of the AT-rich DNA unwinding element (DUE), permitting loading of DNA polymerase. After initiation quickly degrades to an ADP-DnaA complex that is not apt for DNA replication. Binds acidic phospholipids. The chain is Chromosomal replication initiator protein DnaA from Desulfatibacillum aliphaticivorans.